Here is a 101-residue protein sequence, read N- to C-terminus: Urinary protein 2 (101 aa).

The first 21 residues, Met1 to Ala21, serve as a signal peptide directing secretion. The UPAR/Ly6 domain occupies Leu22 to Val99. Cystine bridges form between Cys24–Cys51, Cys27–Cys36, Cys43–Cys70, Cys73–Cys89, and Cys90–Cys96. Residues Asn67 and Asn74 are each glycosylated (N-linked (GlcNAc...) asparagine).

Post-translationally, N-glycosylated.

The protein resides in the secreted. This Rattus norvegicus (Rat) protein is Urinary protein 2.